The chain runs to 739 residues: MQLRWTQRGMMWLGALLTLLLCSSLKGQENSFTINSIHMQILPHSTVQNGENLTLQCLVDVSTTSRVKPLHQVLFYKDDVLLHNVSSRRNTESYLIPHVRVCDSGRYKCNVILNNKEKTTPEYEVWVKGVSDPRVTLDKKEVIEGGVVVVNCSVPEEKAPVHFTIEKFELNIRGAKKKREKTSQNQNFVTLEFTVEEQDRTIRFQCQAKIFSGSNVESSRPIQSDLVTVRESFSNPKFHIIPEGKVMEGDDLQVKCTVQVTHQAQSFPEIIIQKDREIVAHNSLSSEAVYSVMATTEHNGNYTCKVEASRISKVSSVVVNVTELFSKPKLESSATHLDQGEDLNLLCSIPGAPPANFTIQKGGMTVSQTQNFTKRVSEWDSGLYTCVAGVGRVFKRSNTVQITVCEMLSKPSIFHDSRSEVIKGQTIEVSCQSVNGTAPIFYQLSNTSKPVANQSVGSNKPAIFRVKPTKDVEYCCSADNCHSHSKMFSEVLRVKVIAPVDEAQLVVLKGEVEPGEPIVFYCSVNEGSFPITYKFYKEKESKPFYQDTINATQIMWHKTTASKEYEGQYYCTASNRANLSKHVIQSNTLTVRVYLPLEKGLIAVVVIGVIIVTLVLGAKCYFLKKAKAKQMPVEMSRPAVPLLNSNNEKTLSDAGTEADRHYGYNEDVGNHAMKPLNENKEPLTLDVEYTEVEVTSPEPHQGLGTKGTETETVYSEIRKADPDFVENRYSRTEGSLDGS.

The signal sequence occupies residues 1-27; it reads MQLRWTQRGMMWLGALLTLLLCSSLKG. At 28–599 the chain is on the extracellular side; the sequence is QENSFTINSI…TVRVYLPLEK (572 aa). Ig-like C2-type domains lie at 35–120, 145–213, and 236–315; these read NSIH…EKTT, GGVV…IFSG, and PKFH…SKVS. N52, N84, and N151 each carry an N-linked (GlcNAc...) asparagine glycan. Residues C57 and C109 are joined by a disulfide bond. 2 disulfide bridges follow: C152/C206 and C256/C304. N301, N320, N356, N371, N435, N446, N453, N550, and N578 each carry an N-linked (GlcNAc...) asparagine glycan. 3 Ig-like C2-type domains span residues 328 to 403, 424 to 493, and 499 to 590; these read PKLE…VQIT, GQTI…EVLR, and PVDE…NTLT. Disulfide bonds link C347–C386, C431–C476, and C522–C571. A helical transmembrane segment spans residues 600 to 618; that stretch reads GLIAVVVIGVIIVTLVLGA. The Cytoplasmic portion of the chain corresponds to 619–739; it reads KCYFLKKAKA…SRTEGSLDGS (121 aa). C620 carries S-palmitoyl cysteine lipidation. 2 consecutive short sequence motifs (ITIM motif) follow at residues 687–692 and 712–717; these read VEYTEV and TVYSEI. Y689 and Y714 each carry phosphotyrosine; by FER. The segment at 708–730 is membrane-bound segment which detaches upon phosphorylation; sequence TETETVYSEIRKADPDFVENRYS. The segment at 722–739 is may play a role in cytoprotective signaling; the sequence is PDFVENRYSRTEGSLDGS. S730 and S735 each carry phosphoserine.

As to quaternary structure, trans-homodimer (via Ig-like C2-type 1 and Ig-like C2-type 2 domains); trans-homodimerization is required for cell-cell interaction. Forms a complex with BDKRB2 and GNAQ. Interacts with BDKRB2 and GNAQ. Interacts with PTPN11; Tyr-714 is critical for PTPN11 recruitment. Interacts with FER. Interacts with CD177; the interaction is Ca(2+)-dependent; the interaction is direct. Phosphorylated on Ser and Tyr residues by src kinases after cellular activation. Upon activation, phosphorylated on Ser-730 which probably initiates the dissociation of the membrane-interaction segment (residues 708-730) from the cell membrane allowing the sequential phosphorylation of Tyr-714 and Tyr-689. Constitutively phosphorylated on Ser-735 in resting platelets. Phosphorylated on tyrosine residues by FER and FES in response to FCER1 activation. In endothelial cells Fyn mediates mechanical-force (stretch or pull) induced tyrosine phosphorylation. In terms of processing, palmitoylation by ZDHHC21 is necessary for cell surface expression in endothelial cells and enrichment in membrane rafts.

It is found in the cell membrane. The protein localises to the membrane raft. Its subcellular location is the cell junction. Cell adhesion molecule which is required for leukocyte transendothelial migration (TEM) under most inflammatory conditions. Tyr-689 plays a critical role in TEM and is required for efficient trafficking of PECAM1 to and from the lateral border recycling compartment (LBRC) and is also essential for the LBRC membrane to be targeted around migrating leukocytes. Trans-homophilic interaction may play a role in endothelial cell-cell adhesion via cell junctions. Heterophilic interaction with CD177 plays a role in transendothelial migration of neutrophils. Homophilic ligation of PECAM1 prevents macrophage-mediated phagocytosis of neighboring viable leukocytes by transmitting a detachment signal. Promotes macrophage-mediated phagocytosis of apoptotic leukocytes by tethering them to the phagocytic cells; PECAM1-mediated detachment signal appears to be disabled in apoptotic leukocytes. Modulates bradykinin receptor BDKRB2 activation. Regulates bradykinin- and hyperosmotic shock-induced ERK1/2 activation in endothelial cells. Induces susceptibility to atherosclerosis. The sequence is that of Platelet endothelial cell adhesion molecule (PECAM1) from Bos taurus (Bovine).